We begin with the raw amino-acid sequence, 156 residues long: 6,7-dimethyl-8-ribityllumazine synthase (156 aa).

Residues F22, 57–59 (AYE), and 81–83 (TVI) contribute to the 5-amino-6-(D-ribitylamino)uracil site. Residue 86 to 87 (GT) participates in (2S)-2-hydroxy-3-oxobutyl phosphate binding. The active-site Proton donor is the H89. Residue F114 coordinates 5-amino-6-(D-ribitylamino)uracil. R128 is a (2S)-2-hydroxy-3-oxobutyl phosphate binding site.

Belongs to the DMRL synthase family. Forms an icosahedral capsid composed of 60 subunits, arranged as a dodecamer of pentamers.

The enzyme catalyses (2S)-2-hydroxy-3-oxobutyl phosphate + 5-amino-6-(D-ribitylamino)uracil = 6,7-dimethyl-8-(1-D-ribityl)lumazine + phosphate + 2 H2O + H(+). The protein operates within cofactor biosynthesis; riboflavin biosynthesis; riboflavin from 2-hydroxy-3-oxobutyl phosphate and 5-amino-6-(D-ribitylamino)uracil: step 1/2. Catalyzes the formation of 6,7-dimethyl-8-ribityllumazine by condensation of 5-amino-6-(D-ribitylamino)uracil with 3,4-dihydroxy-2-butanone 4-phosphate. This is the penultimate step in the biosynthesis of riboflavin. This is 6,7-dimethyl-8-ribityllumazine synthase from Salmonella agona (strain SL483).